A 488-amino-acid chain; its full sequence is Beta-amylase (488 aa).

The substrate site is built by D51, H91, and D99. E184 functions as the Proton donor in the catalytic mechanism. Substrate contacts are provided by K293, H298, and T340. Catalysis depends on E378, which acts as the Proton acceptor. Residues 379–380 and R418 each bind substrate; that span reads NA.

The protein belongs to the glycosyl hydrolase 14 family.

The enzyme catalyses Hydrolysis of (1-&gt;4)-alpha-D-glucosidic linkages in polysaccharides so as to remove successive maltose units from the non-reducing ends of the chains.. This is Beta-amylase (BMY1) from Zea mays (Maize).